Consider the following 443-residue polypeptide: Deoxyguanosinetriphosphate triphosphohydrolase-like protein (443 aa).

Positions 61–246 (RLTHSLEVAC…MEAADDICYG (186 aa)) constitute an HD domain.

The protein belongs to the dGTPase family. Type 3 subfamily.

The protein is Deoxyguanosinetriphosphate triphosphohydrolase-like protein of Pseudomonas aeruginosa (strain LESB58).